A 444-amino-acid chain; its full sequence is Phosphoglucosamine mutase (444 aa).

Residue Ser103 is the Phosphoserine intermediate of the active site. Mg(2+) contacts are provided by Ser103, Asp241, Asp243, and Asp245. The residue at position 103 (Ser103) is a Phosphoserine.

It belongs to the phosphohexose mutase family. Mg(2+) serves as cofactor. In terms of processing, activated by phosphorylation.

It carries out the reaction alpha-D-glucosamine 1-phosphate = D-glucosamine 6-phosphate. Its function is as follows. Catalyzes the conversion of glucosamine-6-phosphate to glucosamine-1-phosphate. The polypeptide is Phosphoglucosamine mutase (Deinococcus geothermalis (strain DSM 11300 / CIP 105573 / AG-3a)).